Here is a 184-residue protein sequence, read N- to C-terminus: MILPIYVYGQPVLRQVAEDITVDYPNLKELIENMFETMDHADGVGLAAPQIGLPIRVVVINLDVLSEDYPEYKDFRKAYINAHIDVVEGEEVSMEEGCLSLPGIHESVKRGSKIHVRYMDENFVEHNEVVEGFLARVMQHEFDHLDGKMFIDHISPLRKQMIKGKLNTMLKGKARSSYKMKQVK.

Fe cation-binding residues include Cys98 and His140. Glu141 is a catalytic residue. Residue His144 participates in Fe cation binding.

The protein belongs to the polypeptide deformylase family. Fe(2+) serves as cofactor.

It carries out the reaction N-terminal N-formyl-L-methionyl-[peptide] + H2O = N-terminal L-methionyl-[peptide] + formate. Its function is as follows. Removes the formyl group from the N-terminal Met of newly synthesized proteins. Requires at least a dipeptide for an efficient rate of reaction. N-terminal L-methionine is a prerequisite for activity but the enzyme has broad specificity at other positions. This is Peptide deformylase from Bacteroides fragilis (strain ATCC 25285 / DSM 2151 / CCUG 4856 / JCM 11019 / LMG 10263 / NCTC 9343 / Onslow / VPI 2553 / EN-2).